Consider the following 173-residue polypeptide: RNA pyrophosphohydrolase (173 aa).

Residues 6-149 (GFRANVGIIL…KRGVYRRALR (144 aa)) enclose the Nudix hydrolase domain. The Nudix box signature appears at 38–59 (GGIDEGETPLDAMYRELWEEVG).

The protein belongs to the Nudix hydrolase family. RppH subfamily. A divalent metal cation is required as a cofactor.

Accelerates the degradation of transcripts by removing pyrophosphate from the 5'-end of triphosphorylated RNA, leading to a more labile monophosphorylated state that can stimulate subsequent ribonuclease cleavage. This is RNA pyrophosphohydrolase from Psychrobacter sp. (strain PRwf-1).